We begin with the raw amino-acid sequence, 1393 residues long: DNA-directed RNA polymerase subunit beta'' (1393 aa).

Zn(2+) is bound by residues C220, C291, C298, and C301.

Belongs to the RNA polymerase beta' chain family. RpoC2 subfamily. In plastids the minimal PEP RNA polymerase catalytic core is composed of four subunits: alpha, beta, beta', and beta''. When a (nuclear-encoded) sigma factor is associated with the core the holoenzyme is formed, which can initiate transcription. Zn(2+) is required as a cofactor.

It localises to the plastid. It is found in the chloroplast. It carries out the reaction RNA(n) + a ribonucleoside 5'-triphosphate = RNA(n+1) + diphosphate. DNA-dependent RNA polymerase catalyzes the transcription of DNA into RNA using the four ribonucleoside triphosphates as substrates. In Gossypium hirsutum (Upland cotton), this protein is DNA-directed RNA polymerase subunit beta''.